Here is a 550-residue protein sequence, read N- to C-terminus: Chaperonin GroEL (550 aa).

Residues 30–33, lysine 51, 87–91, glycine 415, and aspartate 496 each bind ATP; these read TLGP and DGTTT.

This sequence belongs to the chaperonin (HSP60) family. In terms of assembly, forms a cylinder of 14 subunits composed of two heptameric rings stacked back-to-back. Interacts with the co-chaperonin GroES.

It is found in the cytoplasm. The catalysed reaction is ATP + H2O + a folded polypeptide = ADP + phosphate + an unfolded polypeptide.. Its function is as follows. Together with its co-chaperonin GroES, plays an essential role in assisting protein folding. The GroEL-GroES system forms a nano-cage that allows encapsulation of the non-native substrate proteins and provides a physical environment optimized to promote and accelerate protein folding. This chain is Chaperonin GroEL, found in Rickettsia prowazekii (strain Madrid E).